The chain runs to 218 residues: MSDNDELQQIAHLRREYTKGGLRRRDLPAEPLTLFERWLSQACDAKLADPTAMVVATVDEHGQPYQRIVLLKHYDEKGMVFYTNLGSRKAHQIENNPRVSLLFPWHTLERQVMVIGKAERLSTLEVMKYFHSRPRDSQIGAWVSKQSSRISARGILESKFLELKQKFQQGEVPLPSFWGGFRVSLEQIEFWQGGEHRLHDRFLYQRENDAWKIDRLAP.

Substrate contacts are provided by residues Arg-14 to Tyr-17 and Lys-72. FMN contacts are provided by residues Arg-67–Lys-72, Tyr-82–Thr-83, Arg-88, Lys-89, and Gln-111. Tyr-129, Arg-133, and Ser-137 together coordinate substrate. Residues Gln-146 to Ser-147 and Trp-191 contribute to the FMN site. Arg-197–His-199 provides a ligand contact to substrate. Arg-201 is an FMN binding site.

It belongs to the pyridoxamine 5'-phosphate oxidase family. In terms of assembly, homodimer. Requires FMN as cofactor.

It catalyses the reaction pyridoxamine 5'-phosphate + O2 + H2O = pyridoxal 5'-phosphate + H2O2 + NH4(+). The catalysed reaction is pyridoxine 5'-phosphate + O2 = pyridoxal 5'-phosphate + H2O2. It participates in cofactor metabolism; pyridoxal 5'-phosphate salvage; pyridoxal 5'-phosphate from pyridoxamine 5'-phosphate: step 1/1. The protein operates within cofactor metabolism; pyridoxal 5'-phosphate salvage; pyridoxal 5'-phosphate from pyridoxine 5'-phosphate: step 1/1. In terms of biological role, catalyzes the oxidation of either pyridoxine 5'-phosphate (PNP) or pyridoxamine 5'-phosphate (PMP) into pyridoxal 5'-phosphate (PLP). The polypeptide is Pyridoxine/pyridoxamine 5'-phosphate oxidase (Escherichia coli O7:K1 (strain IAI39 / ExPEC)).